The sequence spans 346 residues: 4-amino-5-hydroxymethyl-2-methylpyrimidine phosphate synthase (346 aa).

Position 62 is an N6-(pyridoxal phosphate)lysine (lysine 62). Residue histidine 66 is part of the active site. Pyridoxal 5'-phosphate is bound at residue 114 to 117; that stretch reads GEFG. The short motif at 194–198 is the CCCFC; essential for catalytic activity, may be the site of iron coordination element; the sequence is CCCFC.

It belongs to the NMT1/THI5 family. As to quaternary structure, homodimer. The cofactor is Fe cation.

The protein localises to the cytoplasm. It is found in the nucleus. The catalysed reaction is N(6)-(pyridoxal phosphate)-L-lysyl-[4-amino-5-hydroxymethyl-2-methylpyrimidine phosphate synthase] + L-histidyl-[4-amino-5-hydroxymethyl-2-methylpyrimidine phosphate synthase] + 2 Fe(3+) + 4 H2O = L-lysyl-[4-amino-5-hydroxymethyl-2-methylpyrimidine phosphate synthase] + (2S)-2-amino-5-hydroxy-4-oxopentanoyl-[4-amino-5-hydroxymethyl-2-methylpyrimidine phosphate synthase] + 4-amino-2-methyl-5-(phosphooxymethyl)pyrimidine + 3-oxopropanoate + 2 Fe(2+) + 2 H(+). Its pathway is cofactor biosynthesis; thiamine diphosphate biosynthesis. Functionally, responsible for the formation of the pyrimidine heterocycle in the thiamine biosynthesis pathway. Catalyzes the formation of hydroxymethylpyrimidine phosphate (HMP-P) from histidine and pyridoxal phosphate (PLP). The protein uses PLP and the active site histidine to form HMP-P, generating an inactive enzyme. The enzyme can only undergo a single turnover, which suggests it is a suicide enzyme. The polypeptide is 4-amino-5-hydroxymethyl-2-methylpyrimidine phosphate synthase (Schizosaccharomyces pombe (strain 972 / ATCC 24843) (Fission yeast)).